Consider the following 473-residue polypeptide: Cannabinoid receptor 1 (473 aa).

The Extracellular portion of the chain corresponds to 1–117 (MKSILDGLAD…CFMILNPSQQ (117 aa)). The required for mitochondrial localization stretch occupies residues 2–23 (KSILDGLADTTFRTITTDLLYV). 2 N-linked (GlcNAc...) asparagine glycosylation sites follow: Asn78 and Asn84. Residues 118 to 143 (LAIAVLSLTLGTFTVLENLLVLCVIL) traverse the membrane as a helical segment. At 144–155 (HSRSLRCRPSYH) the chain is on the cytoplasmic side. A helical transmembrane segment spans residues 156–176 (FIGSLAVADLLGSVIFVYSFV). Topologically, residues 177–188 (DFHVFHRKDSPN) are extracellular. Residues 189–213 (VFLFKLGGVTASFTASVGSLFLTAI) traverse the membrane as a helical segment. Residues 214–233 (DRYISIHRPLAYKRIVTRPK) lie on the Cytoplasmic side of the membrane. Residues 234–256 (AVVAFCLMWTIAIVIAVLPLLGW) form a helical membrane-spanning segment. The Extracellular segment spans residues 257–274 (NCKKLQSVCSDIFPLIDE). Residues 275 to 300 (TYLMFWIGVTSVLLLFIVYAYMYILW) form a helical membrane-spanning segment. Over 301-345 (KAHSHAVRMIQRGTQKSIIIHTSEDGKVQVTRPDQARMDIRLAKT) the chain is Cytoplasmic. A helical membrane pass occupies residues 346–366 (LVLILVVLIICWGPLLAIMVY). At 367–378 (DVFGKMNKLIKT) the chain is on the extracellular side. Residues 379–400 (VFAFCSMLCLLNSTVNPIIYAL) traverse the membrane as a helical segment. Over 401–473 (RSKDLRHAFR…VSTDTSAEAL (73 aa)) the chain is Cytoplasmic. A lipid anchor (S-palmitoyl cysteine) is attached at Cys416. Phosphoserine occurs at positions 426 and 430.

This sequence belongs to the G-protein coupled receptor 1 family. In terms of assembly, interacts (via C-terminus) with CNRIP1. Associates with G protein alpha subunits, including G(i) alpha-1/GNAI1, G(i) alpha-3/GNAI3 and G(o)-alpha/GNAO1; palmitoylation is important for interaction with GNAI3 and GNAO1. In terms of processing, palmitoylation at Cys-416 is important for recruitment at both plasma membrane and lipid rafts and association with G protein alpha subunits. As to expression, expressed in the brain, in the striatum, medial septum, descending arm of the band of Broca, the amygdaloid nucleus, the hippocampus and cortex (at protein level). High levels in the lateral striatum. In rostral brain regions, high expression levels in the dorsal lateral striatum, while in the caudal brain regions, high levels are observed in the ventral lateral striatum. Expressed in monocytes/macrophages (at protein level). Expressed in striated muscles and in vascular smooth muscles cells (at protein level).

It is found in the cell membrane. The protein localises to the mitochondrion outer membrane. Its subcellular location is the cell projection. It localises to the axon. The protein resides in the presynapse. With respect to regulation, hemopressin, a peptide derived from hemoglobin subunit alpha (HBA1 and/or HBA2), acts as an antagonist peptide: hemopressin-binding efficiently blocks cannabinoid receptor CNR1 and subsequent signaling. G-protein coupled receptor for cannabinoids, including endocannabinoids (eCBs), such as N-arachidonoylethanolamide (also called anandamide or AEA) and 2-arachidonoylglycerol (2-AG). Mediates many cannabinoid-induced effects, acting, among others, on food intake, memory loss, gastrointestinal motility, catalepsy, ambulatory activity, anxiety, chronic pain. Signaling typically involves reduction in cyclic AMP. In the hypothalamus, may have a dual effect on mitochondrial respiration depending upon the agonist dose and possibly upon the cell type. Increases respiration at low doses, while decreases respiration at high doses. At high doses, CNR1 signal transduction involves G-protein alpha-i protein activation and subsequent inhibition of mitochondrial soluble adenylate cyclase, decrease in cyclic AMP concentration, inhibition of protein kinase A (PKA)-dependent phosphorylation of specific subunits of the mitochondrial electron transport system, including NDUFS2. In the hypothalamus, inhibits leptin-induced reactive oxygen species (ROS) formation and mediates cannabinoid-induced increase in SREBF1 and FASN gene expression. In response to cannabinoids, drives the release of orexigenic beta-endorphin, but not that of melanocyte-stimulating hormone alpha/alpha-MSH, from hypothalamic POMC neurons, hence promoting food intake. In the hippocampus, regulates cellular respiration and energy production in response to cannabinoids. Involved in cannabinoid-dependent depolarization-induced suppression of inhibition (DSI), a process in which depolarization of CA1 postsynaptic pyramidal neurons mobilizes eCBs, which retrogradely activate presynaptic CB1 receptors, transiently decreasing GABAergic inhibitory neurotransmission. Also reduces excitatory synaptic transmission. In superior cervical ganglions and cerebral vascular smooth muscle cells, inhibits voltage-gated Ca(2+) channels in a constitutive, as well as agonist-dependent manner. Induces leptin production in adipocytes and reduces LRP2-mediated leptin clearance in the kidney, hence participating in hyperleptinemia. In adipose tissue, CNR1 signaling leads to increased expression of SREBF1, ACACA and FASN genes. In the liver, activation by endocannabinoids leads to increased de novo lipogenesis and reduced fatty acid catabolism, associated with increased expression of SREBF1/SREBP-1, GCK, ACACA, ACACB and FASN genes. May also affect de novo cholesterol synthesis and HDL-cholesteryl ether uptake. Peripherally modulates energy metabolism. In high carbohydrate diet-induced obesity, may decrease the expression of mitochondrial dihydrolipoyl dehydrogenase/DLD in striated muscles, as well as that of selected glucose/ pyruvate metabolic enzymes, hence affecting energy expenditure through mitochondrial metabolism. In response to cannabinoid anandamide, elicits a pro-inflammatory response in macrophages, which involves NLRP3 inflammasome activation and IL1B and IL18 secretion. In macrophages infiltrating pancreatic islets, this process may participate in the progression of type-2 diabetes and associated loss of pancreatic beta-cells. The protein is Cannabinoid receptor 1 (Cnr1) of Rattus norvegicus (Rat).